Here is a 154-residue protein sequence, read N- to C-terminus: SsrA-binding protein (154 aa).

A disordered region spans residues 131–154 (DKRQDLKQKEAKRDIERAFKERQQ). Positions 132 to 154 (KRQDLKQKEAKRDIERAFKERQQ) are enriched in basic and acidic residues.

This sequence belongs to the SmpB family.

It localises to the cytoplasm. Its function is as follows. Required for rescue of stalled ribosomes mediated by trans-translation. Binds to transfer-messenger RNA (tmRNA), required for stable association of tmRNA with ribosomes. tmRNA and SmpB together mimic tRNA shape, replacing the anticodon stem-loop with SmpB. tmRNA is encoded by the ssrA gene; the 2 termini fold to resemble tRNA(Ala) and it encodes a 'tag peptide', a short internal open reading frame. During trans-translation Ala-aminoacylated tmRNA acts like a tRNA, entering the A-site of stalled ribosomes, displacing the stalled mRNA. The ribosome then switches to translate the ORF on the tmRNA; the nascent peptide is terminated with the 'tag peptide' encoded by the tmRNA and targeted for degradation. The ribosome is freed to recommence translation, which seems to be the essential function of trans-translation. This chain is SsrA-binding protein, found in Listeria innocua serovar 6a (strain ATCC BAA-680 / CLIP 11262).